A 331-amino-acid polypeptide reads, in one-letter code: UPF0194 membrane protein CKO_02332 (331 aa).

Residues 1-15 (MKKPVVIALAVAALA) form the signal peptide. A coiled-coil region spans residues 142–207 (ISANDLENAR…ELDLQDTTLI (66 aa)).

The protein belongs to the UPF0194 family.

It localises to the periplasm. In Citrobacter koseri (strain ATCC BAA-895 / CDC 4225-83 / SGSC4696), this protein is UPF0194 membrane protein CKO_02332.